The following is a 307-amino-acid chain: Serine/threonine-protein phosphatase PP2A-2 catalytic subunit (307 aa).

The Mn(2+) site is built by Asp-55, His-57, Asp-83, and Asn-115. Residue His-116 is the Proton donor of the active site. Residues His-165 and His-239 each coordinate Mn(2+).

The protein belongs to the PPP phosphatase family. PP-2A subfamily. Requires Mn(2+) as cofactor.

The protein localises to the cytoplasm. The catalysed reaction is O-phospho-L-seryl-[protein] + H2O = L-seryl-[protein] + phosphate. It carries out the reaction O-phospho-L-threonyl-[protein] + H2O = L-threonyl-[protein] + phosphate. This is Serine/threonine-protein phosphatase PP2A-2 catalytic subunit (PP2A2) from Oryza sativa subsp. indica (Rice).